The chain runs to 482 residues: tRNA sulfurtransferase (482 aa).

Positions 61 to 165 (LAIRDALTRI…DDRLLLIKGR (105 aa)) constitute a THUMP domain. ATP-binding positions include 183-184 (LI), Lys265, Gly287, and Gln296. Cys344 and Cys456 are disulfide-bonded. Residues 404 to 482 (FGPNDVILDI…GFNNVKVYRP (79 aa)) enclose the Rhodanese domain. Cys456 functions as the Cysteine persulfide intermediate in the catalytic mechanism.

It belongs to the ThiI family.

The protein localises to the cytoplasm. The enzyme catalyses [ThiI sulfur-carrier protein]-S-sulfanyl-L-cysteine + a uridine in tRNA + 2 reduced [2Fe-2S]-[ferredoxin] + ATP + H(+) = [ThiI sulfur-carrier protein]-L-cysteine + a 4-thiouridine in tRNA + 2 oxidized [2Fe-2S]-[ferredoxin] + AMP + diphosphate. The catalysed reaction is [ThiS sulfur-carrier protein]-C-terminal Gly-Gly-AMP + S-sulfanyl-L-cysteinyl-[cysteine desulfurase] + AH2 = [ThiS sulfur-carrier protein]-C-terminal-Gly-aminoethanethioate + L-cysteinyl-[cysteine desulfurase] + A + AMP + 2 H(+). It functions in the pathway cofactor biosynthesis; thiamine diphosphate biosynthesis. Catalyzes the ATP-dependent transfer of a sulfur to tRNA to produce 4-thiouridine in position 8 of tRNAs, which functions as a near-UV photosensor. Also catalyzes the transfer of sulfur to the sulfur carrier protein ThiS, forming ThiS-thiocarboxylate. This is a step in the synthesis of thiazole, in the thiamine biosynthesis pathway. The sulfur is donated as persulfide by IscS. This Escherichia coli (strain ATCC 8739 / DSM 1576 / NBRC 3972 / NCIMB 8545 / WDCM 00012 / Crooks) protein is tRNA sulfurtransferase.